A 468-amino-acid chain; its full sequence is Chromosomal replication initiator protein DnaA (468 aa).

The domain I, interacts with DnaA modulators stretch occupies residues 1–84; that stretch reads MSSSLWLQCL…RFEVGSKPIS (84 aa). A domain II region spans residues 84 to 131; sequence SAPPRPQRTAADVAAATSAPAQMQARQSLHKPWESRGPEPVDDLNHRS. The disordered stretch occupies residues 112–132; that stretch reads LHKPWESRGPEPVDDLNHRSN. Over residues 114–129 the composition is skewed to basic and acidic residues; sequence KPWESRGPEPVDDLNH. The interval 132–348 is domain III, AAA+ region; sequence NVNPKHKFTN…GALNRVVANA (217 aa). ATP contacts are provided by G176, G178, K179, and T180. The domain IV, binds dsDNA stretch occupies residues 349-468; the sequence is NFTGRAITID…YSNLIRTLSS (120 aa).

This sequence belongs to the DnaA family. In terms of assembly, oligomerizes as a right-handed, spiral filament on DNA at oriC.

It localises to the cytoplasm. Its function is as follows. Plays an essential role in the initiation and regulation of chromosomal replication. ATP-DnaA binds to the origin of replication (oriC) to initiate formation of the DNA replication initiation complex once per cell cycle. Binds the DnaA box (a 9 base pair repeat at the origin) and separates the double-stranded (ds)DNA. Forms a right-handed helical filament on oriC DNA; dsDNA binds to the exterior of the filament while single-stranded (ss)DNA is stabiized in the filament's interior. The ATP-DnaA-oriC complex binds and stabilizes one strand of the AT-rich DNA unwinding element (DUE), permitting loading of DNA polymerase. After initiation quickly degrades to an ADP-DnaA complex that is not apt for DNA replication. Binds acidic phospholipids. This Aliivibrio salmonicida (strain LFI1238) (Vibrio salmonicida (strain LFI1238)) protein is Chromosomal replication initiator protein DnaA.